The following is a 264-amino-acid chain: Spermidine/putrescine transport system permease protein PotC (264 aa).

The Cytoplasmic segment spans residues 1–7; it reads MIGRLLR. The chain crosses the membrane as a helical span at residues 8–27; that stretch reads GGFMTAIYAYLYIPIIILIV. The Periplasmic segment spans residues 28-65; sequence NSFNSSRFGINWQGFTTKWYSLLMNNDSLLQAAQHSLT. The ABC transmembrane type-1 domain occupies 60 to 248; that stretch reads AQHSLTMAVF…VLSLVMVIAS (189 aa). The chain crosses the membrane as a helical span at residues 66–85; sequence MAVFSATFATLIGSLTAVAL. The Cytoplasmic segment spans residues 86-100; that stretch reads YRYRFRGKPFVSGML. A helical membrane pass occupies residues 101 to 120; the sequence is FVVMMSPDIVMAISLLVLFM. Topologically, residues 121–128 are periplasmic; sequence LLGIQLGF. A helical membrane pass occupies residues 129–148; sequence WSLLFSHITFCLPFVVVTVY. Over 149 to 176 the chain is Cytoplasmic; that stretch reads SRLKGFDVRMLEAAKDLGASEFTILRKI. The helical transmembrane segment at 177–196 threads the bilayer; that stretch reads ILPLAMPAVAAGWVLSFTLS. At 197 to 231 the chain is on the periplasmic side; it reads MDDVVVSSFVTGPSYEILPLKIYSMVKVGVSPEVN. The chain crosses the membrane as a helical span at residues 232–251; sequence ALATILLVLSLVMVIASQLI. Residues 252 to 264 are Cytoplasmic-facing; it reads ARDKTKGNTGDVK.

Belongs to the binding-protein-dependent transport system permease family. CysTW subfamily.

It is found in the cell inner membrane. Functionally, required for the activity of the bacterial periplasmic transport system of putrescine and spermidine. This chain is Spermidine/putrescine transport system permease protein PotC (potC), found in Escherichia coli O157:H7.